The primary structure comprises 446 residues: Beta-glucosidase A (446 aa).

The active-site Proton donor is E166. The active-site Nucleophile is the E351.

This sequence belongs to the glycosyl hydrolase 1 family.

The enzyme catalyses Hydrolysis of terminal, non-reducing beta-D-glucosyl residues with release of beta-D-glucose.. It participates in glycan metabolism; cellulose degradation. The chain is Beta-glucosidase A (bglA) from Thermotoga maritima (strain ATCC 43589 / DSM 3109 / JCM 10099 / NBRC 100826 / MSB8).